The following is a 68-amino-acid chain: Large ribosomal subunit protein bL33c (68 aa).

It belongs to the bacterial ribosomal protein bL33 family.

The protein resides in the plastid. Its subcellular location is the chloroplast. The polypeptide is Large ribosomal subunit protein bL33c (Piper cenocladum (Ant piper)).